The sequence spans 685 residues: Invasion protein InvA (685 aa).

The next 8 helical transmembrane spans lie at 17-37 (ILVL…TYLV), 39-59 (FLIA…FYID), 61-81 (ILSF…RLAL), 110-130 (SLAV…IVIT), 197-217 (AIAG…VGMT), 235-255 (IGDG…AGFI), 274-294 (LLNN…MGTL), and 295-315 (PGFP…LFYF).

Belongs to the FHIPEP (flagella/HR/invasion proteins export pore) family.

Its subcellular location is the cell inner membrane. Involved in the invasion of the cells of the intestinal epithelium. Could be involved in the translocation of the InvE protein. The sequence is that of Invasion protein InvA (invA) from Salmonella typhi.